Here is a 341-residue protein sequence, read N- to C-terminus: Thymidine kinase (341 aa).

Residue 19–26 coordinates ATP; that stretch reads GAYGIGKT. The Proton acceptor role is filled by Glu-48. Residues Tyr-66 and Gln-90 each contribute to the substrate site. An ATP-binding site is contributed by Arg-183. Arg-189 serves as a coordination point for substrate.

The protein belongs to the herpesviridae thymidine kinase family. Homodimer.

The enzyme catalyses thymidine + ATP = dTMP + ADP + H(+). Catalyzes the transfer of the gamma-phospho group of ATP to thymidine to generate dTMP in the salvage pathway of pyrimidine synthesis. The dTMP serves as a substrate for DNA polymerase during viral DNA replication. Allows the virus to be reactivated and to grow in non-proliferative cells lacking a high concentration of phosphorylated nucleic acid precursors. The protein is Thymidine kinase of Varicella-zoster virus (strain Oka vaccine) (HHV-3).